The primary structure comprises 212 residues: Peptide methionine sulfoxide reductase MsrA (212 aa).

Residue C52 is part of the active site.

The protein belongs to the MsrA Met sulfoxide reductase family.

The catalysed reaction is L-methionyl-[protein] + [thioredoxin]-disulfide + H2O = L-methionyl-(S)-S-oxide-[protein] + [thioredoxin]-dithiol. The enzyme catalyses [thioredoxin]-disulfide + L-methionine + H2O = L-methionine (S)-S-oxide + [thioredoxin]-dithiol. In terms of biological role, has an important function as a repair enzyme for proteins that have been inactivated by oxidation. Catalyzes the reversible oxidation-reduction of methionine sulfoxide in proteins to methionine. The polypeptide is Peptide methionine sulfoxide reductase MsrA (Salmonella choleraesuis (strain SC-B67)).